Consider the following 329-residue polypeptide: Tryptophan--tRNA ligase (329 aa).

Residues 9 to 11 (QPS) and 17 to 18 (GN) contribute to the ATP site. Residues 10–18 (PSGIPTIGN) carry the 'HIGH' region motif. Asp133 contributes to the L-tryptophan binding site. ATP-binding positions include 145–147 (GDD), Val184, and 193–197 (KMSKS). The 'KMSKS' region signature appears at 193–197 (KMSKS).

This sequence belongs to the class-I aminoacyl-tRNA synthetase family. As to quaternary structure, homodimer.

Its subcellular location is the cytoplasm. It catalyses the reaction tRNA(Trp) + L-tryptophan + ATP = L-tryptophyl-tRNA(Trp) + AMP + diphosphate + H(+). In terms of biological role, catalyzes the attachment of tryptophan to tRNA(Trp). The polypeptide is Tryptophan--tRNA ligase (Staphylococcus aureus (strain MRSA252)).